We begin with the raw amino-acid sequence, 344 residues long: 1-acyl-sn-glycerol-3-phosphate acyltransferase BAT2, chloroplastic (344 aa).

The transit peptide at methionine 1 to histidine 49 directs the protein to the chloroplast. The chain crosses the membrane as a helical span at residues glycine 113–threonine 133. Positions histidine 188–aspartate 193 match the HXXXXD motif motif. The chain crosses the membrane as a helical span at residues threonine 210–leucine 230.

This sequence belongs to the 1-acyl-sn-glycerol-3-phosphate acyltransferase family. Widely expressed.

The protein resides in the plastid. It localises to the chloroplast membrane. The catalysed reaction is a fatty acyl-[ACP] + a 1-acyl-sn-glycero-3-phosphate = a 1,2-diacyl-sn-glycero-3-phosphate + holo-[ACP]. It carries out the reaction a 1-acyl-sn-glycero-3-phosphate + an acyl-CoA = a 1,2-diacyl-sn-glycero-3-phosphate + CoA. It functions in the pathway phospholipid metabolism; CDP-diacylglycerol biosynthesis; CDP-diacylglycerol from sn-glycerol 3-phosphate: step 2/3. Functionally, plastidial enzyme of the prokaryotic glycerol-3-phosphate pathway that converts lysophosphatidic acid (LPA) into phosphatidic acid by incorporating an acyl moiety at position sn-2. Utilizes palmitoyl-ACP (16:0-ACP) to produce phosphatidic acid containing a saturated group at position sn-2, which is characteristic of lipids synthesized by the prokaryotic pathway. In vitro, can use 16:0-CoA as acyl donor. This is 1-acyl-sn-glycerol-3-phosphate acyltransferase BAT2, chloroplastic from Brassica napus (Rape).